Here is a 479-residue protein sequence, read N- to C-terminus: Deoxyribodipyrimidine photo-lyase (479 aa).

The 127-residue stretch at 6–132 (APVIVWFRKD…TVRSFSGQLL (127 aa)) folds into the Photolyase/cryptochrome alpha/beta domain. Tyr226 contributes to the FAD binding site. Arg230 lines the DNA pocket. FAD-binding positions include 238-242 (TSLLS) and 277-284 (EIVWREFC). Interaction with DNA stretches follow at residues 277–284 (EIVWREFC) and 343–344 (NR). 374–376 (DAD) contributes to the FAD binding site. Position 406 (Gln406) interacts with DNA.

This sequence belongs to the DNA photolyase class-3 family. FAD serves as cofactor. The cofactor is (6R)-5,10-methylene-5,6,7,8-tetrahydrofolate.

It carries out the reaction cyclobutadipyrimidine (in DNA) = 2 pyrimidine residues (in DNA).. Its function is as follows. Photolyase involved in the repair of UV radiation-induced DNA damage. By using blue-light energy, catalyzes the photoreactivation of cyclobutane pyrimidine dimers (CPDs), which are formed between adjacent bases on the same DNA strand upon exposure to ultraviolet radiation. Can repair CPD lesions in ssDNA as well as in dsDNA. The sequence is that of Deoxyribodipyrimidine photo-lyase from Agrobacterium fabrum (strain C58 / ATCC 33970) (Agrobacterium tumefaciens (strain C58)).